Consider the following 252-residue polypeptide: MESGLIRRLAPRLGIAEQEVLRKAEEYLRLSRVKCVGLSARTTETSNAVMCLDLAASCMKCPLDRAYLIKLSGLNKKMYQSCLKSFECLLGLNSNIGIRDLAVQFSCTEAVNLASKILQSYESSLPQTQQVDLDLSRPLFTTAALLSACKILKLKVDRNKMAATSGVKKAIFDRLCKQLEKIGQQIDREAGDSVTPPQKKKKTVIEPSAKEIENVVETLPKPQKDEDLTQDYEEWKRNILENAARAQKAATQ.

Thr195 is modified (phosphothreonine). Lys210 is covalently cross-linked (Glycyl lysine isopeptide (Lys-Gly) (interchain with G-Cter in SUMO2)). Thr229 is modified (phosphothreonine).

This sequence belongs to the ORC6 family. In terms of assembly, component of ORC, a complex composed of at least 6 subunits: ORC1, ORC2, ORC3, ORC4, ORC5 and ORC6. ORC is regulated in a cell-cycle dependent manner. It is sequentially assembled at the exit from anaphase of mitosis and disassembled as cells enter S phase. Interacts with DBF4.

The protein localises to the nucleus. Functionally, component of the origin recognition complex (ORC) that binds origins of replication. DNA-binding is ATP-dependent. The specific DNA sequences that define origins of replication have not been identified yet. ORC is required to assemble the pre-replication complex necessary to initiate DNA replication. This Bos taurus (Bovine) protein is Origin recognition complex subunit 6 (ORC6).